The following is a 42-amino-acid chain: Gastric inhibitory polypeptide (42 aa).

The protein belongs to the glucagon family.

The protein localises to the secreted. Functionally, potent stimulator of insulin secretion and relatively poor inhibitor of gastric acid secretion. This Sus scrofa (Pig) protein is Gastric inhibitory polypeptide (GIP).